Reading from the N-terminus, the 581-residue chain is Suppressor of cytokine signaling 7 (581 aa).

Disordered stretches follow at residues Met1–Pro23, Pro89–Glu109, Glu123–Ser272, and Gln297–Leu316. Composition is skewed to pro residues over residues Pro89 to Ala99, Pro154 to Phe164, and Gln187 to Leu198. The mediates interaction with SORBS3 stretch occupies residues Ala124–Arg494. A compositionally biased stretch (basic residues) spans Gly208 to Arg219. Over residues Pro303 to Arg313 the composition is skewed to pro residues. One can recognise an SH2 domain in the interval Trp400–Val509. The 51-residue stretch at Gln504–Tyr554 folds into the SOCS box domain.

In terms of assembly, substrate-recognition component of the ECS(SOCS7) complex, composed of SOCS7, CUL5, ELOB, ELOC and RNF7/RBX2. Interacts, via the third proline-rich region, with the second SH3 domain of the adapter protein NCK1. Also interacts with GRB2, INSR, PLCG1, SORBS3/vinexin, and phosphorylated STAT3 and STAT5. Interacts with SEPT6. Interacts with phosphorylated IRS4 and PIK3R1. As to expression, expressed in brain and leukocytes. Also in fetal lung fibroblasts and fetal brain.

The protein resides in the cytoplasm. Its subcellular location is the nucleus. The protein localises to the cell membrane. It functions in the pathway protein modification; protein ubiquitination. Substrate-recognition component of a cullin-5-RING E3 ubiquitin-protein ligase complex (ECS complex, also named CRL5 complex), which mediates the ubiquitination and subsequent proteasomal degradation of target proteins, such as DAB1 and IRS1. Specifically recognizes and binds phosphorylated proteins via its SH2 domain, promoting their ubiquitination. The ECS(SOCS7) complex acts as a key regulator of reelin signaling by mediating ubiquitination and degradation of phosphorylated DAB1 in the cortical plate of the developing cerebral cortex, thereby regulating neuron positioning during cortex development. Functions in insulin signaling and glucose homeostasis through IRS1 ubiquitination and subsequent proteasomal degradation. Also inhibits prolactin, growth hormone and leptin signaling by preventing STAT3 and STAT5 activation, sequestering them in the cytoplasm and reducing their binding to DNA. In Homo sapiens (Human), this protein is Suppressor of cytokine signaling 7.